The sequence spans 196 residues: Rac-like GTP-binding protein ARAC5 (196 aa).

Residue 16–21 (AVGKTC) coordinates GTP. The short motif at 35-43 (YVPTVFDNF) is the Effector region element. GTP contacts are provided by residues 119–121 (KLD) and 159–161 (SSK). Cysteine 193 carries the cysteine methyl ester modification. Cysteine 193 carries the S-geranylgeranyl cysteine lipid modification. Residues 194-196 (VFL) constitute a propeptide, removed in mature form.

This sequence belongs to the small GTPase superfamily. Rho family. Interacts with GDI1 and ROPGEF8 homodimer. Binds to SPK1. In terms of tissue distribution, ubiquitous. Preferentially expressed at the tip of root hairs.

The protein resides in the cytoplasm. The protein localises to the membrane. It localises to the cell membrane. Involved in cell polarity control during the actin-dependent tip growth of root hairs, thus regulating root hair length and root hair initiation. Its function is as follows. Inactive GDP-bound Rho GTPases reside in the cytosol, are found in a complex with Rho GDP-dissociation inhibitors (Rho GDIs), and are released from the GDI protein in order to translocate to membranes upon activation. The chain is Rac-like GTP-binding protein ARAC5 from Arabidopsis thaliana (Mouse-ear cress).